Here is a 73-residue protein sequence, read N- to C-terminus: Large ribosomal subunit protein uL30 (73 aa).

This sequence belongs to the universal ribosomal protein uL30 family. As to quaternary structure, part of the 50S ribosomal subunit.

This is Large ribosomal subunit protein uL30 from Borreliella afzelii (strain PKo) (Borrelia afzelii).